We begin with the raw amino-acid sequence, 134 residues long: Profilin-1 (134 aa).

The cysteines at positions 13 and 118 are disulfide-linked. An Involved in PIP2 interaction motif is present at residues 84–100 (AVIRGKKGSGGITIKKT). Residue threonine 114 is modified to Phosphothreonine.

It belongs to the profilin family. Occurs in many kinds of cells as a complex with monomeric actin in a 1:1 ratio. Post-translationally, phosphorylated by MAP kinases.

The protein resides in the cytoplasm. Its subcellular location is the cytoskeleton. Binds to actin and affects the structure of the cytoskeleton. At high concentrations, profilin prevents the polymerization of actin, whereas it enhances it at low concentrations. The protein is Profilin-1 of Olea europaea (Common olive).